We begin with the raw amino-acid sequence, 327 residues long: Beta-1,4-galactosyltransferase 7 (327 aa).

Residues 1–30 are Cytoplasmic-facing; that stretch reads MFPSRRKAAQLPWEDGRSGLLSGGLPRKCS. Residues 31 to 51 form a helical; Signal-anchor for type II membrane protein membrane-spanning segment; it reads VFHLFVACLSLGFFSLLWLQL. Residues 52–327 lie on the Lumenal side of the membrane; sequence SCSGDVARAV…KTATPWCTFS (276 aa). A disordered region spans residues 63-87; that stretch reads GQGQETSGPPRACPPEPPPEHWEED. Residues 100–104 and 139–141 each bind UDP-alpha-D-galactose; these read PFRER and FNR. Asn-154 carries N-linked (GlcNAc...) asparagine glycosylation. Residues 164–165, Tyr-194, and Trp-224 each bind UDP-alpha-D-galactose; that span reads VD. Asp-165 contacts Mn(2+). Position 226–229 (226–229) interacts with N-acetyl-D-glucosamine; that stretch reads REDD. A Mn(2+)-binding site is contributed by His-257. UDP-alpha-D-galactose-binding positions include 257–259 and Arg-266; that span reads HLH. Cys-316 and Cys-324 are joined by a disulfide.

The protein belongs to the glycosyltransferase 7 family. The cofactor is Mn(2+). High expression in heart, pancreas and liver, medium in placenta and kidney, low in brain, skeletal muscle and lung.

It localises to the golgi apparatus. It is found in the golgi stack membrane. It catalyses the reaction 3-O-(beta-D-xylosyl)-L-seryl-[protein] + UDP-alpha-D-galactose = 3-O-(beta-D-galactosyl-(1-&gt;4)-beta-D-xylosyl)-L-seryl-[protein] + UDP + H(+). Its pathway is protein modification; protein glycosylation. Functionally, required for the biosynthesis of the tetrasaccharide linkage region of proteoglycans, especially for small proteoglycans in skin fibroblasts. The chain is Beta-1,4-galactosyltransferase 7 (B4GALT7) from Homo sapiens (Human).